Consider the following 108-residue polypeptide: Immunoglobulin kappa variable 11-125 (108 aa).

The interval 1–23 (DVQMIQSPSSLSASLGDIVTMTC) is framework-1. An intrachain disulfide couples Cys-23 to Cys-88. The complementarity-determining-1 stretch occupies residues 24-34 (QASQGTSINLN). The segment at 35-49 (WFQQKPGKAPKLLIY) is framework-2. Positions 50–56 (GASILED) are complementarity-determining-2. A framework-3 region spans residues 57-88 (GVPSRFSGSRYGTDFTLTISSLEDEDMATYFC). Residues 89–97 (LQHSYLPYT) form a complementarity-determining-3 region. A framework-4 region spans residues 98–108 (FGGGTKLEIKR).

This is Immunoglobulin kappa variable 11-125 from Mus musculus (Mouse).